Here is a 132-residue protein sequence, read N- to C-terminus: Small ribosomal subunit protein uS8 (132 aa).

The protein belongs to the universal ribosomal protein uS8 family. As to quaternary structure, part of the 30S ribosomal subunit. Contacts proteins S5 and S12.

In terms of biological role, one of the primary rRNA binding proteins, it binds directly to 16S rRNA central domain where it helps coordinate assembly of the platform of the 30S subunit. The sequence is that of Small ribosomal subunit protein uS8 from Anaeromyxobacter dehalogenans (strain 2CP-1 / ATCC BAA-258).